A 297-amino-acid polypeptide reads, in one-letter code: Signal-transducing adaptor protein 1 (297 aa).

The PH domain occupies 25 to 121; that stretch reads PLYFEGFLLV…WRGFILTVTE (97 aa). Y170 is modified (phosphotyrosine). In terms of domain architecture, SH2 spans 179 to 273; it reads ECFYAVSRKE…GNLRPFIHSA (95 aa). The interval 271 to 297 is disordered; it reads HSADDNFGQDPNIEDRSEKFKKNPHNA.

Interacts with URI1; the interaction is phosphorylation-dependent occurs in a growth-dependent manner. Interacts with KIT and CSF1R. Post-translationally, phosphorylated on tyrosine by TEC. Phosphorylated on tyrosine by KIT. As to expression, expression restricted to the bone marrow.

The protein localises to the nucleus. It is found in the cytoplasm. It localises to the mitochondrion. Functionally, may function as an adapter molecule downstream of KIT in the proliferation or differentiation of hematopoietic stem cells. The polypeptide is Signal-transducing adaptor protein 1 (Stap1) (Mus musculus (Mouse)).